Here is a 464-residue protein sequence, read N- to C-terminus: Fumarate hydratase class II (464 aa).

Substrate is bound by residues 100–102 (SGT), 131–134 (HPND), 141–143 (SSN), and T189. H190 (proton donor/acceptor) is an active-site residue. S320 is a catalytic residue. Substrate-binding positions include S321 and 326–328 (KVN).

It belongs to the class-II fumarase/aspartase family. Fumarase subfamily. As to quaternary structure, homotetramer.

It is found in the cytoplasm. The enzyme catalyses (S)-malate = fumarate + H2O. Its pathway is carbohydrate metabolism; tricarboxylic acid cycle; (S)-malate from fumarate: step 1/1. In terms of biological role, involved in the TCA cycle. Catalyzes the stereospecific interconversion of fumarate to L-malate. This chain is Fumarate hydratase class II, found in Deinococcus radiodurans (strain ATCC 13939 / DSM 20539 / JCM 16871 / CCUG 27074 / LMG 4051 / NBRC 15346 / NCIMB 9279 / VKM B-1422 / R1).